The following is a 31-amino-acid chain: Palustrin-2a (31 aa).

C23 and C29 form a disulfide bridge.

As to expression, expressed by the skin glands.

The protein resides in the secreted. Antimicrobial activity against Gram-negative bacterium E.coli. This is Palustrin-2a from Lithobates palustris (Pickerel frog).